Consider the following 344-residue polypeptide: Protein URE2 (344 aa).

A disordered region spans residues 1–49; it reads MMSTDQHIQQNMNDNSNNSNNSNNNNTNNNNNNQSVNVNVNNTNNNTQT. Residues 9-49 show a composition bias toward low complexity; that stretch reads QQNMNDNSNNSNNSNNNNTNNNNNNQSVNVNVNNTNNNTQT. The region spanning 102 to 186 is the GST N-terminal domain; the sequence is EGFTLFSHRS…YLVSKYLKEN (85 aa). The GST C-terminal domain occupies 195 to 344; the sequence is NLIEQSQISS…PAVKRALRGD (150 aa).

It belongs to the GST superfamily. In terms of assembly, homodimer.

Its function is as follows. Plays an important role in the cellular response to the nitrogen source. URE2 gene plays a major part in the repression of GLN1 and GDH2 genes by glutamine, and is required for the inactivation of glutamine synthetase. URE2 gene product may catalytically inactivate GLN3 in response to an increase in the intracellular concentration of glutamine. In Candida albicans (strain SC5314 / ATCC MYA-2876) (Yeast), this protein is Protein URE2 (URE2).